The following is a 230-amino-acid chain: 7-cyano-7-deazaguanine synthase (230 aa).

9-19 (LSGGLDSATTA) contacts ATP. The Zn(2+) site is built by C190, C198, C201, and C204.

This sequence belongs to the QueC family. Zn(2+) serves as cofactor.

It catalyses the reaction 7-carboxy-7-deazaguanine + NH4(+) + ATP = 7-cyano-7-deazaguanine + ADP + phosphate + H2O + H(+). It functions in the pathway purine metabolism; 7-cyano-7-deazaguanine biosynthesis. In terms of biological role, catalyzes the ATP-dependent conversion of 7-carboxy-7-deazaguanine (CDG) to 7-cyano-7-deazaguanine (preQ(0)). This Microcystis aeruginosa (strain NIES-843 / IAM M-2473) protein is 7-cyano-7-deazaguanine synthase.